The sequence spans 490 residues: Hippocampus abundant transcript 1 protein (490 aa).

The residue at position 1 (Met1) is an N-acetylmethionine. Residues 1-40 lie on the Extracellular side of the membrane; sequence MTQGKKKKRAANRSIMLAKKIIIKDGGTPQGIGSPSVYHA. The N-linked (GlcNAc...) asparagine glycan is linked to Asn12. The helical transmembrane segment at 41-61 threads the bilayer; sequence VIVIFLEFFAWGLLTAPTLVV. The Cytoplasmic segment spans residues 62–74; it reads LHETFPKHTFLMN. The helical transmembrane segment at 75 to 95 threads the bilayer; that stretch reads GLIQGVKGLLSFLSAPLIGAL. Residues 96 to 103 are Extracellular-facing; sequence SDVWGRKS. The chain crosses the membrane as a helical span at residues 104–124; sequence FLLLTVFFTCAPIPLMKISPW. The Cytoplasmic portion of the chain corresponds to 125–126; the sequence is WY. The helical transmembrane segment at 127–147 threads the bilayer; it reads FAVISVSGVFAVTFSVVFAYV. Over 148–160 the chain is Extracellular; it reads ADITQEHERSMAY. A helical membrane pass occupies residues 161-181; the sequence is GLVSATFAASLVTSPAIGAYL. Residues 182–188 lie on the Cytoplasmic side of the membrane; sequence GRVYGDS. A helical membrane pass occupies residues 189–209; that stretch reads LVVVLATAIALLDICFILVAV. The Extracellular segment spans residues 210–243; that stretch reads PESLPEKMRPASWGAPISWEQADPFASLKKVGQD. The chain crosses the membrane as a helical span at residues 244–264; sequence SIVLLICITVFLSYLPEAGQY. At 265–284 the chain is on the cytoplasmic side; it reads SSFFLYLRQIMKFSPESVAA. Residues 285-305 form a helical membrane-spanning segment; the sequence is FIAVLGILSIIAQTIVLSLLM. Topologically, residues 306 to 313 are extracellular; sequence RSIGNKNT. Residues 314–334 traverse the membrane as a helical segment; the sequence is ILLGLGFQILQLAWYGFGSEP. The Cytoplasmic segment spans residues 335-337; it reads WMM. A helical membrane pass occupies residues 338 to 358; the sequence is WAAGAVAAMSSITFPAVSALV. Topologically, residues 359-379 are extracellular; it reads SRTADADQQGVVQGMITGIRG. A helical transmembrane segment spans residues 380-400; sequence LCNGLGPALYGFIFYIFHVEL. At 401–427 the chain is on the cytoplasmic side; that stretch reads KELPITGTDLGTNTSPQHHFEQNSIIP. The helical transmembrane segment at 428–448 threads the bilayer; sequence GPPFLFGACSVLLALLVALFI. At 449–490 the chain is on the extracellular side; it reads PEHTNLSLRSSSWRKHCGSHSHPHSTQAPGEAKEPLLQDTNV. Residue Asn453 is glycosylated (N-linked (GlcNAc...) asparagine). Residues 466 to 490 are disordered; sequence GSHSHPHSTQAPGEAKEPLLQDTNV.

It belongs to the major facilitator superfamily. As to expression, expressed in various tissues.

The protein resides in the membrane. In Mus musculus (Mouse), this protein is Hippocampus abundant transcript 1 protein.